A 261-amino-acid polypeptide reads, in one-letter code: tRNA pseudouridine synthase A (261 aa).

The Nucleophile role is filled by Asp51. Tyr109 is a substrate binding site.

This sequence belongs to the tRNA pseudouridine synthase TruA family. In terms of assembly, homodimer.

The enzyme catalyses uridine(38/39/40) in tRNA = pseudouridine(38/39/40) in tRNA. In terms of biological role, formation of pseudouridine at positions 38, 39 and 40 in the anticodon stem and loop of transfer RNAs. This chain is tRNA pseudouridine synthase A, found in Psychromonas ingrahamii (strain DSM 17664 / CCUG 51855 / 37).